The sequence spans 369 residues: Dihydroorotate dehydrogenase (quinone) (369 aa).

Residues 76-80 (AGLDK) and threonine 100 each bind FMN. Residue lysine 80 participates in substrate binding. 125–129 (NRMGF) serves as a coordination point for substrate. Positions 154 and 187 each coordinate FMN. Asparagine 187 is a binding site for substrate. The Nucleophile role is filled by serine 190. Position 192 (asparagine 192) interacts with substrate. Lysine 232 and serine 260 together coordinate FMN. 261–262 (NT) serves as a coordination point for substrate. FMN contacts are provided by residues glycine 282, glycine 311, and 332–333 (YS).

Belongs to the dihydroorotate dehydrogenase family. Type 2 subfamily. Monomer. Requires FMN as cofactor.

It localises to the cell membrane. It carries out the reaction (S)-dihydroorotate + a quinone = orotate + a quinol. It participates in pyrimidine metabolism; UMP biosynthesis via de novo pathway; orotate from (S)-dihydroorotate (quinone route): step 1/1. In terms of biological role, catalyzes the conversion of dihydroorotate to orotate with quinone as electron acceptor. The chain is Dihydroorotate dehydrogenase (quinone) (pyrD) from Deinococcus radiodurans (strain ATCC 13939 / DSM 20539 / JCM 16871 / CCUG 27074 / LMG 4051 / NBRC 15346 / NCIMB 9279 / VKM B-1422 / R1).